Here is a 178-residue protein sequence, read N- to C-terminus: Large ribosomal subunit protein bL25 (178 aa).

It belongs to the bacterial ribosomal protein bL25 family. CTC subfamily. In terms of assembly, part of the 50S ribosomal subunit; part of the 5S rRNA/L5/L18/L25 subcomplex. Contacts the 5S rRNA. Binds to the 5S rRNA independently of L5 and L18.

In terms of biological role, this is one of the proteins that binds to the 5S RNA in the ribosome where it forms part of the central protuberance. The polypeptide is Large ribosomal subunit protein bL25 (Helicobacter pylori (strain HPAG1)).